Here is a 662-residue protein sequence, read N- to C-terminus: Zinc finger protein 17 (662 aa).

Positions 8-101 constitute a KRAB domain; that stretch reads MVFEDVAIHF…LLKDILHLAE (94 aa). 16 consecutive C2H2-type zinc fingers follow at residues 190–212, 218–240, 246–268, 274–296, 302–324, 358–380, 386–408, 414–436, 442–464, 470–492, 498–520, 526–548, 554–576, 582–604, 610–632, and 638–660; these read YSCTQCGKDFCHQHTLFEHQKIH, YECSECGKLFRYNSDLIKHQRNH, YKCSECGKAFSLKYNVVQHQKIH, YECSECGKAFLRKSHLLQHQRIH, YVCSECGKAFLTQAHLVGHQKIH, FYCCECGKFFMDSCTLIIHQRVH, YECNECGKFFRYRSTLIRHQKVH, YECSECGKFFMDTSTLIIHQRVH, YECNKCGKFFRYCFTLNRHQRVH, YECSECGKFFVDSCTLKSHQRVH, FECSICGKSFRCRSTLDTHQRIH, YECSECGKFFRHNSNHIRHRRNH, FECTECGRVFSQNSHLIRHQKVH, YKCSKCGKFFMDSSTLISHERVH, YECSECGKVFRYNSSLIKHRRIH, and YQCSECGRVFNQNSHLIQHQKVH.

Belongs to the krueppel C2H2-type zinc-finger protein family.

Its subcellular location is the nucleus. In terms of biological role, may be involved in transcriptional regulation. In Homo sapiens (Human), this protein is Zinc finger protein 17 (ZNF17).